Here is a 331-residue protein sequence, read N- to C-terminus: Protein mono-ADP-ribosyltransferase PARP11 (331 aa).

K11 carries the N6-(ADP-ribosyl)lysine modification. Positions 15–99 constitute a WWE domain; it reads SDVDDMDTSD…VTGKQRLIKR (85 aa). 2 positions are modified to ADP-ribosylcysteine: C49 and C65. Residue D80 is modified to ADP-ribosyl aspartic acid. The region spanning 116 to 331 is the PARP catalytic domain; the sequence is IPMPTHWENV…IYPEYLIDFH (216 aa).

It belongs to the ARTD/PARP family. Auto-mono-ADP-ribosylated. Predominantly expressed in testis, preferentially in postmeiotic germ cells. Also detectable in other tissues, including liver, lung, spleen, thymus and brain.

The protein localises to the nucleus. The protein resides in the nuclear pore complex. It catalyses the reaction L-aspartyl-[protein] + NAD(+) = 4-O-(ADP-D-ribosyl)-L-aspartyl-[protein] + nicotinamide. The catalysed reaction is L-cysteinyl-[protein] + NAD(+) = S-(ADP-D-ribosyl)-L-cysteinyl-[protein] + nicotinamide + H(+). The enzyme catalyses L-glutamyl-[protein] + NAD(+) = 5-O-(ADP-D-ribosyl)-L-glutamyl-[protein] + nicotinamide. It carries out the reaction L-lysyl-[protein] + NAD(+) = N(6)-(ADP-D-ribosyl)-L-lysyl-[protein] + nicotinamide + H(+). Its function is as follows. Mono-ADP-ribosyltransferase that mediates mono-ADP-ribosylation of target proteins. Plays a role in nuclear envelope stability and nuclear remodeling during spermiogenesis. Inhibits the type I interferon activated signaling pathway. Mechanistically, mono-ADP-ribosylates beta-TrCP/BTRC to promote IFNAR1 ubiquitination and protect BTRC from ubiquitin-proteasome degradation. The sequence is that of Protein mono-ADP-ribosyltransferase PARP11 from Mus musculus (Mouse).